The following is a 471-amino-acid chain: Cysteine--tRNA ligase (471 aa).

Position 29 (Cys-29) interacts with Zn(2+). Positions 31 to 41 (PTVYNYIHIGN) match the 'HIGH' region motif. Zn(2+)-binding residues include Cys-209, His-234, and Glu-238. Positions 266–270 (KMSKS) match the 'KMSKS' region motif. Lys-269 contacts ATP.

Belongs to the class-I aminoacyl-tRNA synthetase family. In terms of assembly, monomer. Zn(2+) serves as cofactor.

The protein localises to the cytoplasm. It carries out the reaction tRNA(Cys) + L-cysteine + ATP = L-cysteinyl-tRNA(Cys) + AMP + diphosphate. The chain is Cysteine--tRNA ligase from Listeria welshimeri serovar 6b (strain ATCC 35897 / DSM 20650 / CCUG 15529 / CIP 8149 / NCTC 11857 / SLCC 5334 / V8).